Here is a 210-residue protein sequence, read N- to C-terminus: Glutathione S-transferase P (210 aa).

The GST N-terminal domain occupies 2-81 (PPYTIVYFPV…HLGRSLGLYG (80 aa)). The residue at position 4 (Tyr4) is a Phosphotyrosine; by EGFR. Glutathione is bound by residues Tyr8, Arg14, Trp39, Lys45, and 52-53 (QL). Thr62 is subject to Phosphothreonine. A glutathione-binding site is contributed by 65 to 66 (QS). The region spanning 83 to 204 (DQREAALVDM…SSPDHVNRPI (122 aa)) is the GST C-terminal domain. 2 positions are modified to N6-succinyllysine: Lys103 and Lys116. Residue Lys128 is modified to N6-acetyllysine.

The protein belongs to the GST superfamily. Pi family. Homodimer. Interacts with CDK5.

It localises to the cytoplasm. The protein resides in the mitochondrion. Its subcellular location is the nucleus. The catalysed reaction is RX + glutathione = an S-substituted glutathione + a halide anion + H(+). It catalyses the reaction prostaglandin J2 + glutathione = prostaglandin J2-S-(R)-glutathione. It carries out the reaction prostaglandin J2 + glutathione = prostaglandin J2-S-(S)-glutathione. The enzyme catalyses prostaglandin A2 + glutathione = prostaglandin A2-S-(S)-glutathione. The catalysed reaction is 11(S)-hydroxy-14(S),15(S)-epoxy-(5Z,8Z,12E)-eicosatrienoate + glutathione = (11S,15S)-dihydroxy-14(R)-S-glutathionyl-(5Z,8Z,12E)-eicosatrienoate. In terms of biological role, conjugation of reduced glutathione to a wide number of exogenous and endogenous hydrophobic electrophiles. Involved in the formation of glutathione conjugates of both prostaglandin A2 (PGA2) and prostaglandin J2 (PGJ2). Participates in the formation of novel hepoxilin regioisomers. Negatively regulates CDK5 activity via p25/p35 translocation to prevent neurodegeneration. This chain is Glutathione S-transferase P (GSTP1), found in Cricetulus longicaudatus (Long-tailed dwarf hamster).